A 359-amino-acid polypeptide reads, in one-letter code: UPF0283 membrane protein RL2646 (359 aa).

Residues 1 to 48 form a disordered region; that stretch reads MSKPPSDPPRRAPAAFIYEDEATERRDNGRQGGERRKPESFSEHIVVT. Positions 23–42 are enriched in basic and acidic residues; the sequence is TERRDNGRQGGERRKPESFS. A run of 2 helical transmembrane segments spans residues 77–97 and 111–131; these read FGKI…GLWT and LGYA…ALVI.

This sequence belongs to the UPF0283 family.

Its subcellular location is the cell inner membrane. This chain is UPF0283 membrane protein RL2646, found in Rhizobium johnstonii (strain DSM 114642 / LMG 32736 / 3841) (Rhizobium leguminosarum bv. viciae).